A 314-amino-acid polypeptide reads, in one-letter code: Olfactory receptor 5P67 (314 aa).

Topologically, residues 1–28 (MAFLEDGNHTAVTEFILLGLTDDPVLRV) are extracellular. The N-linked (GlcNAc...) asparagine glycan is linked to Asn-8. A helical transmembrane segment spans residues 29 to 49 (ILFTIILCIYLVTVSGNLSTI). The Cytoplasmic segment spans residues 50–57 (LLIRVSSQ). Residues 58–78 (LHHPMYFFLSHVGSVDIGYSS) form a helical membrane-spanning segment. The Extracellular portion of the chain corresponds to 79 to 102 (SVTPNMLVNFLVEKHTIAYLGCGI). Cys-100 and Cys-192 form a disulfide bridge. Residues 103–123 (QLSSAAFFGTAECFLLATMAY) form a helical membrane-spanning segment. Residues 124 to 136 (DRFVAICNPLLYS) are Cytoplasmic-facing. Residues 137 to 157 (TKMSTQTCIQLVVGSYTGGIL) traverse the membrane as a helical segment. Topologically, residues 158–199 (NASFAIISFFSFLFCGPNRINHFYCDFAPLVELSCSDINVSV) are extracellular. A helical transmembrane segment spans residues 200-220 (VITTIFSASVTIITVFVIAIS). Topologically, residues 221–240 (YTYILITILKMRSTEGRHKA) are cytoplasmic. A helical membrane pass occupies residues 241–261 (FSTCTSYLTAVTLFYGTVTFI). Residues 262 to 274 (YVVPKSNYSTDQN) lie on the Extracellular side of the membrane. Asn-268 carries N-linked (GlcNAc...) asparagine glycosylation. A helical membrane pass occupies residues 275-295 (KVASVFYIVVIPMLNPLIYSL). Residues 296–314 (RNNDIKGALKRQLGKKTFS) lie on the Cytoplasmic side of the membrane.

It belongs to the G-protein coupled receptor 1 family.

It is found in the cell membrane. Potential odorant receptor. This Mus musculus (Mouse) protein is Olfactory receptor 5P67.